Here is a 414-residue protein sequence, read N- to C-terminus: Tetraspanning orphan receptor (414 aa).

Over 1–28 (MPRASALLTSDPRHQFTCCLCLHVRTGT) the chain is Cytoplasmic. A helical transmembrane segment spans residues 29 to 49 (IIFGITQIIIQLIFISFLFLM). Topologically, residues 50–166 (TFNPRLFPED…EIKIRQFSPY (117 aa)) are extracellular. A helical transmembrane segment spans residues 167–187 (IAVCVTTFSLAFCCFMVHGAI). At 188-194 (TRQPTHL) the chain is on the cytoplasmic side. Residues 195–215 (LPFFFIQVFDLIICLIHILGF) traverse the membrane as a helical segment. At 216-241 (MSSTSDIRLMIHTKTGPIYIKSTGLA) the chain is on the extracellular side. Residues 242–262 (FIILSISCMMLAFKAYCLGMV) traverse the membrane as a helical segment. Residues 263–414 (WDCYKYLMLN…TSTPSNVHPC (152 aa)) lie on the Cytoplasmic side of the membrane. A disordered region spans residues 306–328 (LTGNLDSANESNTRAHPDPVTYD).

In terms of assembly, interacts (via N-terminal extracellular domain) with human C2a. Phosphorylated on tyrosine residues.

The protein localises to the cell membrane. Cell surface receptor that binds to human complement C2a protein. This results in inhibition of the classical and lectin pathways of complement activation, probably due to interference with binding of C2a to C4b and interference with cleavage by C1 or MASP2 such that C3 convertase cannot be formed. This infers resistance to complement-mediated cell lysis, allowing parasite survival and infection. The chain is Tetraspanning orphan receptor from Schistosoma japonicum (Blood fluke).